The chain runs to 268 residues: Indole-3-glycerol phosphate synthase (268 aa).

This sequence belongs to the TrpC family.

It catalyses the reaction 1-(2-carboxyphenylamino)-1-deoxy-D-ribulose 5-phosphate + H(+) = (1S,2R)-1-C-(indol-3-yl)glycerol 3-phosphate + CO2 + H2O. It functions in the pathway amino-acid biosynthesis; L-tryptophan biosynthesis; L-tryptophan from chorismate: step 4/5. In Micrococcus luteus (strain ATCC 4698 / DSM 20030 / JCM 1464 / CCM 169 / CCUG 5858 / IAM 1056 / NBRC 3333 / NCIMB 9278 / NCTC 2665 / VKM Ac-2230) (Micrococcus lysodeikticus), this protein is Indole-3-glycerol phosphate synthase.